Reading from the N-terminus, the 85-residue chain is Sec-independent protein translocase protein TatA (85 aa).

Residues methionine 1–glycine 21 traverse the membrane as a helical segment. The interval valine 43–aspartate 85 is disordered. Polar residues predominate over residues glutamine 56 to glycine 73.

The protein belongs to the TatA/E family. In terms of assembly, the Tat system comprises two distinct complexes: a TatABC complex, containing multiple copies of TatA, TatB and TatC subunits, and a separate TatA complex, containing only TatA subunits. Substrates initially bind to the TatABC complex, which probably triggers association of the separate TatA complex to form the active translocon.

It localises to the cell inner membrane. In terms of biological role, part of the twin-arginine translocation (Tat) system that transports large folded proteins containing a characteristic twin-arginine motif in their signal peptide across membranes. TatA could form the protein-conducting channel of the Tat system. This Azotobacter vinelandii (strain DJ / ATCC BAA-1303) protein is Sec-independent protein translocase protein TatA.